We begin with the raw amino-acid sequence, 282 residues long: MIVSGLSGSGKSVALKTFEDLDYYCSDNLPVELLPDFVRSRLRGNPLGDQRLAVGIDVRSRSDLTQLAQWRQAAQEYGIEARLLFFEASDEALLKRYADTRRRHPLSQLGLALPEAITRERELTAPLRAQADAIIDTSALNVHQLRRRVVTEFALGNSDRLSLLFESFAYKRGVPAEADFVFDARVLPNPHWDPELRPLTGRDAGVRDYLDKEPDVIRYSAQIVDLLDTWLPRLRNDTRSYVTIAFGCTGGKHRSVYLAERMARHAREQGWPEVATFHREQD.

An ATP-binding site is contributed by 5–12 (GLSGSGKS). 57-60 (DVRS) contacts GTP.

This sequence belongs to the RapZ-like family.

Functionally, displays ATPase and GTPase activities. In Xanthomonas campestris pv. campestris (strain ATCC 33913 / DSM 3586 / NCPPB 528 / LMG 568 / P 25), this protein is Nucleotide-binding protein XCC2806.